A 485-amino-acid polypeptide reads, in one-letter code: UDP-N-acetylmuramate--L-alanine ligase (485 aa).

125–131 (GTHGKTT) serves as a coordination point for ATP.

Belongs to the MurCDEF family.

It is found in the cytoplasm. The enzyme catalyses UDP-N-acetyl-alpha-D-muramate + L-alanine + ATP = UDP-N-acetyl-alpha-D-muramoyl-L-alanine + ADP + phosphate + H(+). It functions in the pathway cell wall biogenesis; peptidoglycan biosynthesis. In terms of biological role, cell wall formation. In Stutzerimonas stutzeri (strain A1501) (Pseudomonas stutzeri), this protein is UDP-N-acetylmuramate--L-alanine ligase.